We begin with the raw amino-acid sequence, 359 residues long: MTSTSKGILRPFLIVCIILGCFMACLLIYIKPTNSWVFSPMESASSVLKMKNFFSTKTDYFNETTILVWVWPFGQTFDLTSCQAMFNIQGCHLTTDRSLYNKSHAVLIHHRDISWDLTNLPQQARPPFQKWIWMNLESPTHTPQKSGIEHLFNLTLTYRRDSDIQVPYGFLTVSTNPFVFEVPSKEKLVCWVVSNWNPEHARVKYYNELSKSIEIHTYGQAFGEYVNDKNLIPTISTCKFYLSFENSIHKDYITEKLYNAFLAGSVPVVLGPSRENYENYIPADSFIHVEDFNSPSELAKYLKEVDKNNKLYLSYFNWRKDFTVNLPRFWESHACLACDHVKRHQEYKSVGNLEKWFWN.

Over 1 to 11 (MTSTSKGILRP) the chain is Cytoplasmic. Residues 12–32 (FLIVCIILGCFMACLLIYIKP) form a helical; Signal-anchor for type II membrane protein membrane-spanning segment. Residues 33-359 (TNSWVFSPME…VGNLEKWFWN (327 aa)) are Lumenal-facing. N-linked (GlcNAc...) asparagine glycosylation is present at Asn62. The acceptor-binding stretch occupies residues 63–168 (ETTILVWVWP…RRDSDIQVPY (106 aa)). An a beta-D-galactosyl-(1-&gt;4)-N-acetyl-beta-D-glucosaminyl derivative-binding site is contributed by Gln75. Intrachain disulfides connect Cys82–Cys335, Cys91–Cys338, and Cys190–Cys238. N-linked (GlcNAc...) asparagine glycosylation is present at Asn101. Glu137 is an a beta-D-galactosyl-(1-&gt;4)-N-acetyl-beta-D-glucosaminyl derivative binding site. The Nucleophile role is filled by Glu137. Glu137 contacts GDP-beta-L-fucose. Asn153 carries N-linked (GlcNAc...) asparagine glycosylation. Residues Tyr168, Val192, Ser194, Asn195, Arg202, Val226, Tyr241, Asn246, Tyr252, Glu255, and Lys256 each contribute to the GDP-beta-L-fucose site. A donor-binding region spans residues 169-326 (GFLTVSTNPF…NWRKDFTVNL (158 aa)). The segment at 327-359 (PRFWESHACLACDHVKRHQEYKSVGNLEKWFWN) is acceptor-binding.

Belongs to the glycosyltransferase 10 family. As to quaternary structure, homodimer. N-glycosylated with complex-type N-glycans. Mainly detected in brain and kidney.

The protein resides in the golgi apparatus. It is found in the trans-Golgi network membrane. The protein localises to the golgi apparatus membrane. It catalyses the reaction a beta-D-galactosyl-(1-&gt;4)-N-acetyl-beta-D-glucosaminyl derivative + GDP-beta-L-fucose = a beta-D-galactosyl-(1-&gt;4)-[alpha-L-fucosyl-(1-&gt;3)]-N-acetyl-beta-D-glucosaminyl derivative + GDP + H(+). The catalysed reaction is an alpha-Neu5Ac-(2-&gt;3)-beta-D-Gal-(1-&gt;4)-beta-D-GlcNAc-(1-&gt;3)-beta-D-Gal-(1-&gt;4)-beta-D-GlcNAc derivative + GDP-beta-L-fucose = an alpha-Neu5Ac-(2-&gt;3)-beta-D-Gal-(1-&gt;4)-beta-D-GlcNAc-(1-&gt;3)-beta-D-Gal-(1-&gt;4)-[alpha-L-Fuc-(1-&gt;3)]-beta-D-GlcNAc derivative + GDP + H(+). The enzyme catalyses alpha-N-glycoloylneuraminosyl-(2-&gt;3)-beta-D-galactosyl-(1-&gt;4)-N-acetyl-beta-D-glucosaminyl-(1-&gt;3)-beta-D-galactosyl-(1-&gt;4)-N-acetyl-beta-D-glucosaminyl-(1-&gt;3)-beta-D-galactosyl-(1-&gt;4)-beta-D-glucosyl-(1&lt;-&gt;1')-ceramide + GDP-beta-L-fucose = alpha-N-glycoloylneuraminosyl-(2-&gt;3)-beta-D-galactosyl-(1-&gt;4)-N-acetyl-beta-D-glucosaminyl-(1-&gt;3)-beta-D-galactosyl-(1-&gt;4)-[alpha-L-fucosyl-(1-&gt;3)]-N-acetyl-beta-D-glucosaminyl-(1-&gt;3)-beta-D-galactosyl-(1-&gt;4)-beta-D-glucosyl-(1&lt;-&gt;1')-ceramide + GDP + H(+). It carries out the reaction alpha-D-galactosyl-(1-&gt;3)-beta-D-galactosyl-(1-&gt;4)-N-acetyl-beta-D-glucosaminyl-(1-&gt;3)-beta-D-galactosyl-(1-&gt;4)-beta-D-glucosyl-(1&lt;-&gt;1')-ceramide + GDP-beta-L-fucose = a neolactoside IV(3)-alpha-Gal,III(3)-alpha-Fuc-nLc4Cer + GDP + H(+). It catalyses the reaction a neolactoside nLc4Cer + GDP-beta-L-fucose = a neolactoside III(3)-alpha-Fuc-nLc4Cer + GDP + H(+). The catalysed reaction is an N-acetyl-alpha-neuraminyl-(2-&gt;3)-beta-D-galactosyl-(1-&gt;4)-N-acetyl-beta-D-glucosaminyl derivative + GDP-beta-L-fucose = an alpha-Neu5Ac-(2-&gt;3)-beta-D-Gal-(1-&gt;4)-[alpha-L-Fuc-(1-&gt;3)]-beta-D-GlcNAc derivative + GDP + H(+). The enzyme catalyses beta-D-Gal-(1-&gt;4)-beta-D-GlcNAc-(1-&gt;3)-beta-D-Gal-(1-&gt;4)-D-Glc + GDP-beta-L-fucose = beta-D-Gal-(1-&gt;4)-[alpha-L-Fuc-(1-&gt;3)]-beta-D-GlcNAc-(1-&gt;3)-beta-D-Gal-(1-&gt;4)-D-Glc + GDP + H(+). It carries out the reaction an alpha-L-Fuc-(1-&gt;2)-beta-D-Gal-(1-&gt;4)-beta-D-GlcNAc derivative + GDP-beta-L-fucose = an alpha-L-Fuc-(1-&gt;2)-beta-D-Gal-(1-&gt;4)-[alpha-L-Fuc-(1-&gt;3)]-beta-D-GlcNAc derivative + GDP + H(+). It participates in protein modification; protein glycosylation. Its pathway is glycolipid biosynthesis. Its activity is regulated as follows. Activated by Mn2+. Catalyzes alpha(1-&gt;3) linkage of fucosyl moiety transferred from GDP-beta-L-fucose to N-acetyl glucosamine (GlcNAc) within type 2 lactosamine (LacNAc, beta-D-Gal-(1-&gt;4)-beta-D-GlcNAc-) glycan attached to glycolipids and N- or O-linked glycoproteins. Fucosylates distal type 2 LacNAc and its fucosylated (H-type 2 LacNAc) and sialylated (sialyl-type 2 LacNAc) derivatives to form Lewis x (Lex) (CD15) and Lewis y (Ley) antigenic epitopes involved in cell adhesion and differentiation. Generates Lex epitopes in the brain, presumably playing a role in the maintenance of neuronal stemness and neurite outgrowth in progenitor neural cells. Fucosylates the internal type 2 LacNAc unit of the polylactosamine chain to form VIM-2 antigen that serves as recognition epitope for SELE. Can also modify milk oligosaccharides in particular type 2 tetrasaccharide LNnT. The protein is 4-galactosyl-N-acetylglucosaminide 3-alpha-L-fucosyltransferase 9 of Mus musculus (Mouse).